A 316-amino-acid chain; its full sequence is Olfactory receptor 10H4 (316 aa).

Residues Met-1 to Pro-26 lie on the Extracellular side of the membrane. Residue Asn-5 is glycosylated (N-linked (GlcNAc...) asparagine). Residues Ile-27–Met-47 traverse the membrane as a helical segment. The Cytoplasmic portion of the chain corresponds to Ala-48–Arg-55. Residues Leu-56–Val-76 traverse the membrane as a helical segment. Topologically, residues Ala-77–Asn-100 are extracellular. Cysteines 98 and 190 form a disulfide. A helical transmembrane segment spans residues Gln-101–Tyr-121. The Cytoplasmic segment spans residues Asp-122–Arg-140. Residues Asp-141–Thr-161 traverse the membrane as a helical segment. Over Thr-162–Ile-198 the chain is Extracellular. The chain crosses the membrane as a helical span at residues Met-199 to Ser-219. Residues Tyr-220–Thr-239 are Cytoplasmic-facing. The helical transmembrane segment at Phe-240–Ile-260 threads the bilayer. Residues Tyr-261–Asp-273 are Extracellular-facing. Residues Ala-274 to Leu-294 traverse the membrane as a helical segment. Residues Arg-295–Ser-316 lie on the Cytoplasmic side of the membrane.

It belongs to the G-protein coupled receptor 1 family.

The protein resides in the cell membrane. Functionally, odorant receptor. This Homo sapiens (Human) protein is Olfactory receptor 10H4 (OR10H4).